The primary structure comprises 551 residues: Palmdelphin (551 aa).

An N-acetylmethionine modification is found at M1. A coiled-coil region spans residues 2 to 106; sequence EEAELVKERL…LQISTNEEAI (105 aa). K125 is covalently cross-linked (Glycyl lysine isopeptide (Lys-Gly) (interchain with G-Cter in SUMO2)). Residue S135 is modified to Phosphoserine. A Glycyl lysine isopeptide (Lys-Gly) (interchain with G-Cter in SUMO1); alternate cross-link involves residue K179. K179 is covalently cross-linked (Glycyl lysine isopeptide (Lys-Gly) (interchain with G-Cter in SUMO2); alternate). The span at 247–259 shows a compositional bias: basic and acidic residues; the sequence is SERNSKSPTEYHD. 2 disordered regions span residues 247–393 and 450–529; these read SERN…EDEE and EEEE…IAGD. The residue at position 271 (T271) is a Phosphothreonine. Phosphoserine occurs at positions 321, 370, 384, and 385. A compositionally biased stretch (basic and acidic residues) spans 484–495; the sequence is KRAEVNPHENTN. Phosphoserine is present on residues S498, S515, and S520.

It belongs to the paralemmin family. As to quaternary structure, interacts with GLUL. Cell projection, dendrite. Cell projection, dendritic spine. Phosphorylated.

The protein resides in the cytoplasm. Its subcellular location is the cell projection. The protein localises to the dendrite. It localises to the dendritic spine. The sequence is that of Palmdelphin (PALMD) from Sus scrofa (Pig).